We begin with the raw amino-acid sequence, 818 residues long: Auxin response factor 12 (818 aa).

Low complexity predominate over residues 1–10; sequence MSSSSAASIG. Residues 1-24 form a disordered region; the sequence is MSSSSAASIGPPQPPPPPAPPEEE. Over residues 11–20 the composition is skewed to pro residues; sequence PPQPPPPPAP. Positions 135 to 237 form a DNA-binding region, TF-B3; it reads FCKTLTASDT…QLLLGIRRAS (103 aa). Disordered regions lie at residues 526–565 and 629–648; these read NDQK…FSDP and GSVL…NKIG. Residues 629–640 are compositionally biased toward polar residues; sequence GSVLHNSPTSKD. The region spanning 719 to 803 is the PB1 domain; the sequence is RTFVKVYKSG…WYIKILSPED (85 aa).

Belongs to the ARF family. In terms of assembly, homodimers and heterodimers. As to expression, expressed in roots, culms, leaves and young panicles.

The protein localises to the nucleus. In terms of biological role, auxin response factors (ARFs) are transcriptional factors that bind specifically to the DNA sequence 5'-TGTCTC-3' found in the auxin-responsive promoter elements (AuxREs). The sequence is that of Auxin response factor 12 (ARF12) from Oryza sativa subsp. japonica (Rice).